A 178-amino-acid chain; its full sequence is Large ribosomal subunit protein uL13m (178 aa).

The protein belongs to the universal ribosomal protein uL13 family. As to quaternary structure, component of the mitochondrial ribosome large subunit (39S) which comprises a 16S rRNA and about 50 distinct proteins.

Its subcellular location is the mitochondrion. This Drosophila melanogaster (Fruit fly) protein is Large ribosomal subunit protein uL13m (mRpL13).